The following is a 129-amino-acid chain: Follitropin subunit beta (129 aa).

Positions 1 to 18 (MKSVQFCFLFCCWKAICC) are cleaved as a signal peptide. Cystine bridges form between C21–C69, C35–C84, C38–C122, C46–C100, C50–C102, and C105–C112. N-linked (GlcNAc...) asparagine glycosylation is found at N25 and N42.

It belongs to the glycoprotein hormones subunit beta family. As to quaternary structure, heterodimer. The active follitropin is a heterodimer composed of an alpha chain/CGA shared with other hormones and a unique beta chain/FSHB shown here.

It localises to the secreted. Functionally, together with the alpha chain CGA constitutes follitropin, the follicle-stimulating hormone, and provides its biological specificity to the hormone heterodimer. Binds FSHR, a G protein-coupled receptor, on target cells to activate downstream signaling pathways. Follitropin is involved in follicle development and spermatogenesis in reproductive organs. In Oryctolagus cuniculus (Rabbit), this protein is Follitropin subunit beta (FSHB).